Reading from the N-terminus, the 105-residue chain is 3-phenylpropionate/cinnamic acid dioxygenase ferredoxin subunit (105 aa).

Residues 4 to 99 (LFVCTVEELP…VVVKDGNIYI (96 aa)) form the Rieske domain. Residues Cys42, His44, Cys62, and His65 each coordinate [2Fe-2S] cluster.

The protein belongs to the bacterial ring-hydroxylating dioxygenase ferredoxin component family. This dioxygenase system consists of four proteins: the two subunits of the hydroxylase component (HcaE and HcaF), a ferredoxin (HcaC) and a ferredoxin reductase (HcaD). [2Fe-2S] cluster is required as a cofactor.

The protein operates within aromatic compound metabolism; 3-phenylpropanoate degradation. Functionally, part of the multicomponent 3-phenylpropionate dioxygenase, that converts 3-phenylpropionic acid (PP) and cinnamic acid (CI) into 3-phenylpropionate-dihydrodiol (PP-dihydrodiol) and cinnamic acid-dihydrodiol (CI-dihydrodiol), respectively. This protein seems to be a 2Fe-2S ferredoxin. The protein is 3-phenylpropionate/cinnamic acid dioxygenase ferredoxin subunit of Photorhabdus laumondii subsp. laumondii (strain DSM 15139 / CIP 105565 / TT01) (Photorhabdus luminescens subsp. laumondii).